Here is a 122-residue protein sequence, read N- to C-terminus: Insulin-like 3 (122 aa).

Residues Met-1–Ala-15 form the signal peptide. Disulfide bonds link Cys-29-Cys-107, Cys-41-Cys-120, and Cys-106-Cys-111.

It belongs to the insulin family. As to quaternary structure, heterodimer of a B chain and an A chain linked by two disulfide bonds. As to expression, expressed exclusively in Leydig cells of the testis.

Its subcellular location is the secreted. Functionally, seems to play a role in testicular function. May be a trophic hormone with a role in testicular descent in fetal life. Is a ligand for LGR8 receptor. The sequence is that of Insulin-like 3 (Insl3) from Mus musculus (Mouse).